A 154-amino-acid chain; its full sequence is Protein X (154 aa).

Residues 68–117 (PCALRFTSARYMETAMNTSHHLPRQLYKWTLGLFVMSTTGVEKYFKDCVF) are mitochondrial targeting sequence.

This sequence belongs to the orthohepadnavirus protein X family. May form homodimer. May interact with host CEBPA, CFLAR, CREB1, DDB1, E4F1, HBXIP, HSPD1/HSP60, NFKBIA, POLR2E and SMAD4. Interacts with host SMC5-SMC6 complex and induces its degradation. Interacts with host TRPC4AP; leading to prevent ubiquitination of TRPC4AP. Interacts with host PLSCR1; this interaction promotes ubiquitination and degradation of HBx and impairs HBx-mediated cell proliferation. A fraction may be phosphorylated in insect cells and HepG2 cells, a human hepatoblastoma cell line. Phosphorylated in vitro by host protein kinase C or mitogen-activated protein kinase. N-acetylated in insect cells.

It is found in the host cytoplasm. Its subcellular location is the host nucleus. The protein resides in the host mitochondrion. In terms of biological role, multifunctional protein that plays a role in silencing host antiviral defenses and promoting viral transcription. Does not seem to be essential for HBV infection. May be directly involved in development of cirrhosis and liver cancer (hepatocellular carcinoma). Most of cytosolic activities involve modulation of cytosolic calcium. The effect on apoptosis is controversial depending on the cell types in which the studies have been conducted. May induce apoptosis by localizing in mitochondria and causing loss of mitochondrial membrane potential. May also modulate apoptosis by binding host CFLAR, a key regulator of the death-inducing signaling complex (DISC). Promotes viral transcription by using the host E3 ubiquitin ligase DDB1 to target the SMC5-SMC6 complex to proteasomal degradation. This host complex would otherwise bind to viral episomal DNA, and prevents its transcription. Moderately stimulates transcription of many different viral and cellular transcription elements. Promoters and enhancers stimulated by HBx contain DNA binding sites for NF-kappa-B, AP-1, AP-2, c-EBP, ATF/CREB, or the calcium-activated factor NF-AT. This Hepatitis B virus genotype G (isolate IG29227/2000) (HBV-G) protein is Protein X.